The primary structure comprises 127 residues: Mediator of RNA polymerase II transcription subunit 9 (127 aa).

Positions 95–119 form a coiled coil; it reads QKEQEIEAKKRVHRQLRQRVEEIAG.

This sequence belongs to the Mediator complex subunit 9 family. As to quaternary structure, component of the Mediator complex.

Its subcellular location is the nucleus. Its function is as follows. Component of the Mediator complex, a coactivator involved in the regulated transcription of nearly all RNA polymerase II-dependent genes. Mediator functions as a bridge to convey information from gene-specific regulatory proteins to the basal RNA polymerase II transcription machinery. Mediator is recruited to promoters by direct interactions with regulatory proteins and serves as a scaffold for the assembly of a functional preinitiation complex with RNA polymerase II and the general transcription factors. The chain is Mediator of RNA polymerase II transcription subunit 9 (CSE2) from Eremothecium gossypii (strain ATCC 10895 / CBS 109.51 / FGSC 9923 / NRRL Y-1056) (Yeast).